Consider the following 66-residue polypeptide: Large ribosomal subunit protein bL32 (66 aa).

The protein belongs to the bacterial ribosomal protein bL32 family.

The polypeptide is Large ribosomal subunit protein bL32 (Acetivibrio thermocellus (strain ATCC 27405 / DSM 1237 / JCM 9322 / NBRC 103400 / NCIMB 10682 / NRRL B-4536 / VPI 7372) (Clostridium thermocellum)).